The chain runs to 626 residues: uncharacterized protein (626 aa).

Residues 103–123 (AGALLVKFFPLLLLYPLTYLA) traverse the membrane as a helical segment. Residues 200-618 (FENREPVGSG…DILEAARPFL (419 aa)) enclose the Protein kinase domain. Residues 206 to 214 (VGSGCVAQV) and Lys-311 each bind ATP. Residue Asp-445 is the Proton acceptor of the active site.

It belongs to the protein kinase superfamily. ADCK protein kinase family.

The protein resides in the mitochondrion. The protein localises to the membrane. The function of this protein is not yet clear. It is not known if it has protein kinase activity and what type of substrate it would phosphorylate (Ser, Thr or Tyr). Involved in the mitochondrial import of CoQ precursors, plays a role in muscle mitochondrial function and fatty acid beta-oxidation. This is an uncharacterized protein from Homo sapiens (Human).